A 760-amino-acid polypeptide reads, in one-letter code: Dipeptidyl peptidase 4 (760 aa).

The Cytoplasmic portion of the chain corresponds to 1–6 (MKTPWK). A helical; Signal-anchor for type II membrane protein transmembrane segment spans residues 7–28 (VLLGLLGVAALVTIITVPIVLL). Residues 29–760 (SKDEAAADSR…HFLQQCFSLH (732 aa)) lie on the Extracellular side of the membrane. 7 N-linked (GlcNAc...) asparagine glycosylation sites follow: Asn83, Asn90, Asn144, Asn213, Asn223, Asn315, and Asn328. Intrachain disulfides connect Cys322–Cys333, Cys379–Cys388, Cys438–Cys441, and Cys448–Cys466. N-linked (GlcNAc...) asparagine glycosylation occurs at Asn514. The active-site Charge relay system is Ser624. Cys643 and Cys756 are oxidised to a cystine. Asn679 is a glycosylation site (N-linked (GlcNAc...) asparagine). Active-site charge relay system residues include Asp702 and His734.

The protein belongs to the peptidase S9B family. DPPIV subfamily. In terms of assembly, monomer. Homodimer. Heterodimer with Seprase (FAP). Requires homodimerization for optimal dipeptidyl peptidase activity and T-cell costimulation. Found in a membrane raft complex, at least composed of BCL10, CARD11, DPP4 and IKBKB. Associates with collagen. Interacts with PTPRC; the interaction is enhanced in an interleukin-12-dependent manner in activated lymphocytes. Interacts (via extracellular domain) with ADA; does not inhibit its dipeptidyl peptidase activity. Interacts with CAV1 (via the N-terminus); the interaction is direct. Interacts (via cytoplasmic tail) with CARD11 (via PDZ domain); its homodimerization is necessary for interaction with CARD11. Interacts with IGF2R; the interaction is direct. Interacts with GPC3. The soluble form (Dipeptidyl peptidase 4 soluble form also named SDPP) derives from the membrane form (Dipeptidyl peptidase 4 membrane form also named MDPP) by proteolytic processing. Post-translationally, N- and O-Glycosylated. In terms of processing, phosphorylated. Mannose 6-phosphate residues in the carbohydrate moiety are necessary for interaction with IGF2R in activated T-cells. Mannose 6-phosphorylation is induced during T-cell activation.

The protein resides in the secreted. The protein localises to the cell membrane. It is found in the apical cell membrane. It localises to the cell projection. Its subcellular location is the invadopodium membrane. The protein resides in the lamellipodium membrane. The protein localises to the cell junction. It is found in the membrane raft. The catalysed reaction is Release of an N-terminal dipeptide, Xaa-Yaa-|-Zaa-, from a polypeptide, preferentially when Yaa is Pro, provided Zaa is neither Pro nor hydroxyproline.. Inhibited by GPC3 and diprotin A. Its function is as follows. Cell surface glycoprotein receptor involved in the costimulatory signal essential for T-cell receptor (TCR)-mediated T-cell activation. Acts as a positive regulator of T-cell coactivation, by binding at least ADA, CAV1, IGF2R, and PTPRC. Its binding to CAV1 and CARD11 induces T-cell proliferation and NF-kappa-B activation in a T-cell receptor/CD3-dependent manner. Its interaction with ADA also regulates lymphocyte-epithelial cell adhesion. In association with FAP is involved in the pericellular proteolysis of the extracellular matrix (ECM), the migration and invasion of endothelial cells into the ECM. May be involved in the promotion of lymphatic endothelial cells adhesion, migration and tube formation. When overexpressed, enhanced cell proliferation, a process inhibited by GPC3. Also acts as a serine exopeptidase with a dipeptidyl peptidase activity that regulates various physiological processes by cleaving peptides in the circulation, including many chemokines, mitogenic growth factors, neuropeptides and peptide hormones. Removes N-terminal dipeptides sequentially from polypeptides having unsubstituted N-termini provided that the penultimate residue is proline. In Mus musculus (Mouse), this protein is Dipeptidyl peptidase 4 (Dpp4).